Here is a 108-residue protein sequence, read N- to C-terminus: UPF0235 protein Rpal_0418 (108 aa).

The protein belongs to the UPF0235 family.

This chain is UPF0235 protein Rpal_0418, found in Rhodopseudomonas palustris (strain TIE-1).